The sequence spans 208 residues: Cytidylate kinase (208 aa).

7–15 provides a ligand contact to ATP; sequence GPAASGKGT.

The protein belongs to the cytidylate kinase family. Type 1 subfamily.

It is found in the cytoplasm. It carries out the reaction CMP + ATP = CDP + ADP. The enzyme catalyses dCMP + ATP = dCDP + ADP. The protein is Cytidylate kinase of Xanthobacter autotrophicus (strain ATCC BAA-1158 / Py2).